A 172-amino-acid polypeptide reads, in one-letter code: RNA silencing suppressor p19 (172 aa).

Residues 1 to 20 (MERAIQGNDAREQANSERWD) show a composition bias toward basic and acidic residues. A disordered region spans residues 1–37 (MERAIQGNDAREQANSERWDGGSGGTTSPFKLPDESP).

Belongs to the tombusvirus protein p19 family. In terms of assembly, homodimer.

Its function is as follows. Viral suppressor of RNA silencing which binds specifically to silencing RNAs (siRNAs). Acts as a molecular caliper to specifically select siRNAs based on the length of the duplex region of the RNA. The protein is RNA silencing suppressor p19 of Tomato bushy stunt virus (strain Ja6) (TBSV).